The chain runs to 363 residues: tRNA dimethylallyltransferase (363 aa).

The interval 1–55 is unknown insert; it reads MLACNDDTSLYLLVKQVTKKEIYSNDLENGNVKRGASMQSLYLIGDPKCCRNNSS. ATP is bound at residue 65–72; the sequence is GPTASGKS. A substrate-binding site is contributed by 67-72; it reads TASGKS. 2 interaction with substrate tRNA regions span residues 90 to 93 and 214 to 218; these read DSMQ and QRLIR.

The protein belongs to the IPP transferase family. As to quaternary structure, monomer. It depends on Mg(2+) as a cofactor.

The enzyme catalyses adenosine(37) in tRNA + dimethylallyl diphosphate = N(6)-dimethylallyladenosine(37) in tRNA + diphosphate. Functionally, catalyzes the transfer of a dimethylallyl group onto the adenine at position 37 in tRNAs that read codons beginning with uridine, leading to the formation of N6-(dimethylallyl)adenosine (i(6)A). In Rickettsia conorii (strain ATCC VR-613 / Malish 7), this protein is tRNA dimethylallyltransferase.